We begin with the raw amino-acid sequence, 239 residues long: DNA repair protein RecO (239 aa).

It belongs to the RecO family.

Its function is as follows. Involved in DNA repair and RecF pathway recombination. The polypeptide is DNA repair protein RecO (Bifidobacterium longum (strain DJO10A)).